Here is a 296-residue protein sequence, read N- to C-terminus: SHSP domain-containing protein CPUR_05420 (296 aa).

The interval 50–83 is disordered; that stretch reads AWQTCPQQRHPHQPDVSGPPGSGFGEQPSQDTPN. The sHSP domain occupies 169–296; that stretch reads ETKKSFTPDI…GKGVKEITIV (128 aa).

This sequence belongs to the small heat shock protein (HSP20) family.

In terms of biological role, monooxygenase; part of the ergochrome gene cluster responsible for the typical purple-black color of the ergot sclerotia. The ergochrome gene cluster produces several ergot pigments including the yellow ergochrome secalonic acid and its derivatives, as well as the red anthraquinones endocrocin and clavorubin. The pathway begins with the synthesis of atrochrysone thioester by the polyketide synthase (PKS) CPUR_05437. The atrochrysone carboxyl ACP thioesterase CPUR_05436 then breaks the thioester bond and releases the atrochrysone carboxylic acid from CPUR_05437. The atrochrysone carboxylic acid is then converted to atrochrysone which is further transformed into emodin anthrone. The next step is performed by the anthrone oxygenase CPUR_05434 that catalyzes the oxidation of emodinanthrone to emodin. Emodin is further modified to yield monodictyphenone via several steps involving CPUR_05427, CPUR_05428, CPUR_05429 and CPUR_05430. The short chain dehydrogenase/reductase CPUR_05418 then catalyzes the C-5 ketoreduction to give the xanthone skeleton of the monomeric units. Ergochromes formation requires further dimerization steps of different xanthone units, probably catalyzed by the cytochrome P450 monooxygenase CPUR_05419. CPUR_05425, CPUR_05426 and CPUR_05431 are unique to Claviceps, thus it is likely that they are involved in further modification of xanthone units or in their dimerization. The yellow ergochromes and the red anthraquinone pigments endocrocin and clavorubin are products from the same PKS derived precursors and the latter are likely shunt products in the pathway of xanthone biosynthesis. It is proposed that atrochrysone carboxylic acid released from the PKS CPUR_05437 can also be converted to endocrocin anthrone which is further oxidized into endocrocin by CPUR_05435. Endocrocin could be then modified to clavorubin, possibly by CPUR_05423 and CPUR_05431. Clavorubin is the principal anthraquinone metabolite produced by the cluster with a much higher yield compared to endocrocin. The chain is SHSP domain-containing protein CPUR_05420 from Claviceps purpurea (strain 20.1) (Ergot fungus).